A 223-amino-acid chain; its full sequence is MHKFTKVFFVAILVHTLKSGLVFTPVSGTAIDIDKDGKFADRITINHFQSDMEGYKAYTYQKEGDKYVNISKVFYGERLLKVGGYNMKCDYVFYIKVFWKGELAPFLIKLKYYSWSWAPYKKHFKLNPQLEWEEVFIPTIDETSETGYRRLFKQRMDNPFSLIGDDLLASYKPFKATKAEQVIAGTTEEEKSDKKKYVLMVVVVVVFVVVASLVVFLVKFCLK.

The N-terminal stretch at 1-19 (MHKFTKVFFVAILVHTLKS) is a signal peptide. The Extracellular segment spans residues 20 to 197 (GLVFTPVSGT…EEEKSDKKKY (178 aa)). Asparagine 69 carries N-linked (GlcNAc...) asparagine glycosylation. A helical membrane pass occupies residues 198–218 (VLMVVVVVVFVVVASLVVFLV). The Cytoplasmic portion of the chain corresponds to 219-223 (KFCLK).

The protein localises to the membrane. The protein is 23 kDa piroplasm membrane protein of Theileria buffeli.